The sequence spans 582 residues: Colicin-E9 (582 aa).

Disordered regions lie at residues 1–74 (MSGG…SGGG), 246–270 (SPGV…NTRD), 294–321 (PDQV…EAAE), 422–489 (ADAA…IADK), and 510–542 (SKDP…QQVG). Over residues 20-35 (INGGPTGIGVSGGASD) the composition is skewed to gly residues. The segment covering 36 to 45 (GSGWSSENNP) has biased composition (low complexity). The segment covering 46–74 (WGGGSGSGIHWGGGSGRGNGGGNGNSGGG) has biased composition (gly residues). Composition is skewed to basic and acidic residues over residues 297-321 (VKQR…EAAE), 430-453 (QERR…ESKR), and 465-476 (PVGDKWLDDAGK). The segment covering 516–529 (SKNLNPSNKSSVSK) has biased composition (low complexity). Residues H550, H575, and H579 each coordinate Zn(2+).

It belongs to the colicin/pyosin nuclease family.

Its function is as follows. This plasmid-coded bactericidal protein is an endonuclease active on both single- and double-stranded DNA but with undefined specificity. Colicins are polypeptide toxins produced by and active against E.coli and closely related bacteria. This Escherichia coli protein is Colicin-E9 (col).